A 339-amino-acid chain; its full sequence is MPGLRVPERRFSRVLGVGSYRPRREVSNKEVCTWIDSTEEWIETRTGIRSRRIAEPDETIQVMGVAASRRALEHAGVDPAEIDLVVVSTMTNFVHTPPLSVAIAHELGADNAGGFDLSAACAGFCHALSIAADAVESGGSRHVLVVATERMTDVIDLADRSLSFLFGDGAGAAVVGPSDVPGIGPVVRGIDGTGLGSLHMSSSWDQYVEDPSVGRPALVMDGKRVFRWAVADVVPAAREALEVAGLTVGDLVAFVPHQANLRIIDVLVDRLGVPEHVVVSRDAEDTGNTSSASVALALDRLVRSGAVPGGGPALMIGFGAGLSYAGQALLLPDPPSTPA.

Catalysis depends on residues cysteine 121 and histidine 257. The tract at residues 258–262 is ACP-binding; the sequence is QANLR. Asparagine 288 is a catalytic residue.

This sequence belongs to the thiolase-like superfamily. FabH family. As to quaternary structure, homodimer.

It localises to the cytoplasm. The enzyme catalyses malonyl-[ACP] + propanoyl-CoA + H(+) = 3-oxopentanoyl-[ACP] + CO2 + CoA. It catalyses the reaction 2-methylpropanoyl-CoA + malonyl-[ACP] + H(+) = 4-methyl-3-oxopentanoyl-[ACP] + CO2 + CoA. The catalysed reaction is malonyl-[ACP] + acetyl-CoA + H(+) = 3-oxobutanoyl-[ACP] + CO2 + CoA. It carries out the reaction butanoyl-CoA + malonyl-[ACP] + H(+) = 3-oxohexanoyl-[ACP] + CO2 + CoA. It functions in the pathway lipid metabolism; fatty acid biosynthesis. Functionally, catalyzes the condensation reaction of fatty acid synthesis by the addition to an acyl acceptor of two carbons from malonyl-ACP. Catalyzes the first condensation reaction which initiates fatty acid synthesis and may therefore play a role in governing the total rate of fatty acid production. Possesses both acetoacetyl-ACP synthase and acetyl transacylase activities. Propionyl-CoA and isobutyryl-CoA were the two most preferred substrates, although acetyl-CoA and butyryl-CoA could also be accepted and elongated. Involved in the biosynthesis of R1128 polyketide. In Streptomyces lividans, this protein is Beta-ketoacyl-[acyl-carrier-protein] synthase III.